The following is a 577-amino-acid chain: Sulfite reductase [NADPH] hemoprotein beta-component (577 aa).

Cys-440, Cys-446, Cys-486, and Cys-490 together coordinate [4Fe-4S] cluster. Cys-490 is a binding site for siroheme.

It belongs to the nitrite and sulfite reductase 4Fe-4S domain family. In terms of assembly, alpha(8)-beta(8). The alpha component is a flavoprotein, the beta component is a hemoprotein. It depends on siroheme as a cofactor. Requires [4Fe-4S] cluster as cofactor.

It catalyses the reaction hydrogen sulfide + 3 NADP(+) + 3 H2O = sulfite + 3 NADPH + 4 H(+). Its pathway is sulfur metabolism; hydrogen sulfide biosynthesis; hydrogen sulfide from sulfite (NADPH route): step 1/1. Functionally, component of the sulfite reductase complex that catalyzes the 6-electron reduction of sulfite to sulfide. This is one of several activities required for the biosynthesis of L-cysteine from sulfate. The sequence is that of Sulfite reductase [NADPH] hemoprotein beta-component from Vibrio cholerae serotype O1 (strain ATCC 39541 / Classical Ogawa 395 / O395).